Consider the following 472-residue polypeptide: Glutamate--tRNA ligase (472 aa).

Residues 7-17 (PSPTGFLHVGG) carry the 'HIGH' region motif. The Zn(2+) site is built by Cys96, Cys98, Cys123, and His125. Over residues 112–129 (ARKEKPRYDGRCRHRSEP) the composition is skewed to basic and acidic residues. The interval 112 to 134 (ARKEKPRYDGRCRHRSEPPSDQP) is disordered. Residues 234–238 (KLSKR) carry the 'KMSKS' region motif. Lys237 provides a ligand contact to ATP.

Belongs to the class-I aminoacyl-tRNA synthetase family. Glutamate--tRNA ligase type 1 subfamily. Monomer. Zn(2+) is required as a cofactor.

It is found in the cytoplasm. The enzyme catalyses tRNA(Glu) + L-glutamate + ATP = L-glutamyl-tRNA(Glu) + AMP + diphosphate. In terms of biological role, catalyzes the attachment of glutamate to tRNA(Glu) in a two-step reaction: glutamate is first activated by ATP to form Glu-AMP and then transferred to the acceptor end of tRNA(Glu). This is Glutamate--tRNA ligase from Magnetococcus marinus (strain ATCC BAA-1437 / JCM 17883 / MC-1).